Here is a 599-residue protein sequence, read N- to C-terminus: Beta-(1--&gt;2)glucan export ATP-binding/permease protein NdvA (599 aa).

Residues threonine 21 to threonine 301 form the ABC transmembrane type-1 domain. 5 helical membrane-spanning segments follow: residues isoleucine 22–phenylalanine 42, isoleucine 55–phenylalanine 75, methionine 156–valine 176, methionine 248–glycine 268, and isoleucine 276–isoleucine 296. Positions isoleucine 335–alanine 569 constitute an ABC transporter domain. An ATP-binding site is contributed by glycine 368–threonine 375.

Belongs to the ABC transporter superfamily. Beta-(1--&gt;2)glucan exporter (TC 3.A.1.108.1) family. As to quaternary structure, homodimer.

The protein resides in the cell inner membrane. The catalysed reaction is [(1-&gt;2)-beta-D-glucosyl](n)(in) + ATP + H2O = [(1-&gt;2)-beta-D-glucosyl](n)(out) + ADP + phosphate + H(+). Involved in beta-(1--&gt;2)glucan export. Transmembrane domains (TMD) form a pore in the inner membrane and the ATP-binding domain (NBD) is responsible for energy generation. The protein is Beta-(1--&gt;2)glucan export ATP-binding/permease protein NdvA of Brucella suis biovar 1 (strain 1330).